Consider the following 230-residue polypeptide: 7-cyano-7-deazaguanine synthase (230 aa).

9–19 (YSGGLDSTTCL) serves as a coordination point for ATP. Zn(2+)-binding residues include Cys-190, Cys-200, Cys-203, and Cys-206.

This sequence belongs to the QueC family. It depends on Zn(2+) as a cofactor.

The catalysed reaction is 7-carboxy-7-deazaguanine + NH4(+) + ATP = 7-cyano-7-deazaguanine + ADP + phosphate + H2O + H(+). Its pathway is purine metabolism; 7-cyano-7-deazaguanine biosynthesis. In terms of biological role, catalyzes the ATP-dependent conversion of 7-carboxy-7-deazaguanine (CDG) to 7-cyano-7-deazaguanine (preQ(0)). The protein is 7-cyano-7-deazaguanine synthase of Syntrophotalea carbinolica (strain DSM 2380 / NBRC 103641 / GraBd1) (Pelobacter carbinolicus).